The primary structure comprises 60 residues: Large ribosomal subunit protein bL33 (60 aa).

Belongs to the bacterial ribosomal protein bL33 family.

The chain is Large ribosomal subunit protein bL33 from Cytophaga hutchinsonii (strain ATCC 33406 / DSM 1761 / CIP 103989 / NBRC 15051 / NCIMB 9469 / D465).